Reading from the N-terminus, the 730-residue chain is Polyribonucleotide nucleotidyltransferase (730 aa).

Mg(2+)-binding residues include aspartate 489 and aspartate 495. One can recognise a KH domain in the interval 556–615 (PRIEVMKIAVDKIREVIGSGGKVIREIVEKTGAKINIEDDGTIKIASASGDAIKAAINWI). In terms of domain architecture, S1 motif spans 625–693 (GQIYEGTVVK…ERGKTRLSMK (69 aa)). The tract at residues 700-730 (GEDLEAKAKAERDAARAAAPAATGDEAGAAE) is disordered. Residues 703-714 (LEAKAKAERDAA) show a composition bias toward basic and acidic residues. Low complexity predominate over residues 715 to 730 (RAAAPAATGDEAGAAE).

The protein belongs to the polyribonucleotide nucleotidyltransferase family. Mg(2+) is required as a cofactor.

Its subcellular location is the cytoplasm. It catalyses the reaction RNA(n+1) + phosphate = RNA(n) + a ribonucleoside 5'-diphosphate. Involved in mRNA degradation. Catalyzes the phosphorolysis of single-stranded polyribonucleotides processively in the 3'- to 5'-direction. The chain is Polyribonucleotide nucleotidyltransferase from Xanthobacter autotrophicus (strain ATCC BAA-1158 / Py2).